Reading from the N-terminus, the 598-residue chain is Beta-galactosidase (598 aa).

A signal peptide spans 1-21; that stretch reads MLRTTLAPLVLALALALPAAA. Glutamate 184 acts as the Proton donor in catalysis. The Nucleophile role is filled by glutamate 260.

The protein belongs to the glycosyl hydrolase 35 family.

It catalyses the reaction Hydrolysis of terminal non-reducing beta-D-galactose residues in beta-D-galactosides.. Its function is as follows. Preferentially hydrolyzes beta(1-&gt;3) galactosyl linkages over beta(1-&gt;4) linkages. The sequence is that of Beta-galactosidase (bga) from Xanthomonas manihotis.